The chain runs to 239 residues: MKVTLFVTCLVDMFETNVGKATVEVLERLGCEIEFPEAQVCCGQPAYNSGHVEAAKEAMKHMIETFEDAEYIVTPSGSCATMFHEYPHVFKDDPKWAKRAQKVADKTYEFTQFIVDVLNVTDVGASLPGIATIHKSCHMTRMLGVTEAPGILLSNVKGLTVRELPNVQNCCGFGGTFSVKMTPISEQMVDEKVDSAMETGADYLIGADCGCLLNIGGRIERLGKEIKVMHIAEVLNSRS.

It belongs to the LutA/YkgE family.

Is involved in L-lactate degradation and allows cells to grow with lactate as the sole carbon source. The polypeptide is Lactate utilization protein A 1 (Bacillus cereus (strain AH820)).